The sequence spans 82 residues: MLPFVQEQIGAFIVNFFILSVVCAVTLVVCLAILTAIRLCVQCVSGCHTLVFLPAVHIYNTGRAAYVKFQESHPPYPPEDWV.

At 1 to 16 (MLPFVQEQIGAFIVNF) the chain is on the virion surface side. A helical transmembrane segment spans residues 17 to 37 (FILSVVCAVTLVVCLAILTAI). Topologically, residues 38–78 (RLCVQCVSGCHTLVFLPAVHIYNTGRAAYVKFQESHPPYPP) are intravirion.

This sequence belongs to the betacoronaviruses E protein family. Homopentamer. Interacts with membrane protein M in the budding compartment of the host cell, which is located between endoplasmic reticulum and the Golgi complex. Interacts with Nucleoprotein.

The protein localises to the host Golgi apparatus membrane. Functionally, plays a central role in virus morphogenesis and assembly. Acts as a viroporin and self-assembles in host membranes forming pentameric protein-lipid pores that allow ion transport. Also plays a role in the induction of apoptosis. In Pipistrellus abramus (Japanese pipistrelle), this protein is Envelope small membrane protein.